The sequence spans 287 residues: Bifunctional protein FolD (287 aa).

NADP(+) contacts are provided by residues 160–162, serine 189, and threonine 230; that span reads GRS.

This sequence belongs to the tetrahydrofolate dehydrogenase/cyclohydrolase family. Homodimer.

It carries out the reaction (6R)-5,10-methylene-5,6,7,8-tetrahydrofolate + NADP(+) = (6R)-5,10-methenyltetrahydrofolate + NADPH. The enzyme catalyses (6R)-5,10-methenyltetrahydrofolate + H2O = (6R)-10-formyltetrahydrofolate + H(+). The protein operates within one-carbon metabolism; tetrahydrofolate interconversion. In terms of biological role, catalyzes the oxidation of 5,10-methylenetetrahydrofolate to 5,10-methenyltetrahydrofolate and then the hydrolysis of 5,10-methenyltetrahydrofolate to 10-formyltetrahydrofolate. In Chlamydia trachomatis serovar D (strain ATCC VR-885 / DSM 19411 / UW-3/Cx), this protein is Bifunctional protein FolD.